Consider the following 680-residue polypeptide: Epithelial splicing regulatory protein 1 (680 aa).

RRM domains lie at 224-301 (TVVR…KATG), 325-405 (VIVR…RSTA), and 444-524 (DCIR…QCSA). Residue Ser542 is modified to Phosphoserine. An Omega-N-methylarginine modification is found at Arg581.

Belongs to the ESRP family. Epithelial cell-specific. Epithelial-specific expression in diverse tissues and organs with particularly notable levels of expression in skin and gastrointestinal epithelia.

The protein resides in the nucleus. Its function is as follows. mRNA splicing factor that regulates the formation of epithelial cell-specific isoforms. Specifically regulates the expression of FGFR2-IIIb, an epithelial cell-specific isoform of FGFR2. Also regulates the splicing of CD44, CTNND1, ENAH, 3 transcripts that undergo changes in splicing during the epithelial-to-mesenchymal transition (EMT). Acts by directly binding specific sequences in mRNAs. Binds the GU-rich sequence motifs in the ISE/ISS-3, a cis-element regulatory region present in the mRNA of FGFR2. Regulates splicing and expression of genes involved in inner ear development, auditory hair cell differentiation, and cell fate specification in the cochlear epithelium. This is Epithelial splicing regulatory protein 1 (Esrp1) from Mus musculus (Mouse).